Consider the following 404-residue polypeptide: Growth/differentiation factor 6-A (404 aa).

Positions 1 to 24 (MDALRAVAFYALFVFLWSLPCCQS) are cleaved as a signal peptide. The propeptide occupies 25-284 (AALISQKRSK…LQFKARRRRR (260 aa)). N-linked (GlcNAc...) asparagine glycosylation occurs at asparagine 91. The segment at 263-304 (KSRGDDDEEESALQFKARRRRRTALNNRHGKRHGKKSKSRCS) is disordered. Positions 278–304 (KARRRRRTALNNRHGKRHGKKSKSRCS) are enriched in basic residues. Intrachain disulfides connect cysteine 303/cysteine 369, cysteine 332/cysteine 401, and cysteine 336/cysteine 403.

It belongs to the TGF-beta family. In terms of assembly, homodimer; disulfide-linked. As to expression, first expressed in late gastrula stage embryos (9.5 hours post fertilization (hpf)) in anterior neuroectoderm corresponding to the future dorsal part of the brain. Shortly after tailbud formation (11 hpf), expression expands to the entire neural region and is subsequently expressed in derivatives of the lateral neural plate and migrating neural crest cells, with the future midbrain and hindbrain showing strong expression. Also expressed weakly and transiently in the posterior embryo from 11.5 hpf to 15 hpf in the lateral mesoderm, and in ectoderm above the neural keel. At 14 hpf, expressed along the entire length of the embryo and starting around the 16-somite stage, expressed in the dorsal quadrant of the retina, representing the distal tip of the eye anlage. At this stage, also expressed in the hatching gland and the hypochord. At 24 hpf, expressed in the roof plate outlining the fourth brain ventricle, in the posterior hypochord, the primitive gut endoderm, the ventral tail mesenchyme, the dorsal part of the neural tube and the dorsal fin. Weakly expressed in the dorsal part of the posterior spinal cord and in blood cell precursors.

The protein localises to the secreted. Growth factor that controls proliferation and cellular differentiation in the retina. Plays a key role in regulating apoptosis during retinal development. Establishes dorsal-ventral positional information in the retina and controls the formation of the retinotectal map. Functions maternally in dorsal/ventral patterning to induce the expression of the zygotic bmp2b and bmp4 genes and ventralize embryos. Zygotic expression does not appear to regulate axis specification, but instead functions to establish the integrity of the axial vessels during embryonic development. May be involved in maintaining the identity of cells of the dorsal-most neural tube and of at least a subset of neural crest cells. This is Growth/differentiation factor 6-A (gdf6a) from Danio rerio (Zebrafish).